A 170-amino-acid chain; its full sequence is Peptide deformylase (170 aa).

Fe cation-binding residues include C91 and H133. E134 is a catalytic residue. Residue H137 participates in Fe cation binding.

This sequence belongs to the polypeptide deformylase family. The cofactor is Fe(2+).

The catalysed reaction is N-terminal N-formyl-L-methionyl-[peptide] + H2O = N-terminal L-methionyl-[peptide] + formate. Removes the formyl group from the N-terminal Met of newly synthesized proteins. Requires at least a dipeptide for an efficient rate of reaction. N-terminal L-methionine is a prerequisite for activity but the enzyme has broad specificity at other positions. This is Peptide deformylase from Histophilus somni (strain 129Pt) (Haemophilus somnus).